A 288-amino-acid chain; its full sequence is Energy-coupling factor transporter ATP-binding protein EcfA2 (288 aa).

An ABC transporter domain is found at 2-244 (IKFEKVNYTY…VDFLKAHELG (243 aa)). Residue 39-46 (GHTGSGKS) coordinates ATP.

This sequence belongs to the ABC transporter superfamily. Energy-coupling factor EcfA family. In terms of assembly, forms a stable energy-coupling factor (ECF) transporter complex composed of 2 membrane-embedded substrate-binding proteins (S component), 2 ATP-binding proteins (A component) and 2 transmembrane proteins (T component).

The protein localises to the cell membrane. Its function is as follows. ATP-binding (A) component of a common energy-coupling factor (ECF) ABC-transporter complex. Unlike classic ABC transporters this ECF transporter provides the energy necessary to transport a number of different substrates. This is Energy-coupling factor transporter ATP-binding protein EcfA2 from Lactococcus lactis subsp. lactis (strain IL1403) (Streptococcus lactis).